We begin with the raw amino-acid sequence, 503 residues long: 26S proteasome non-ATPase regulatory subunit 5 (503 aa).

Ala2 carries the N-acetylalanine modification.

The protein belongs to the proteasome subunit S5B/HSM3 family. As to quaternary structure, interacts with PSMC1, PSMC2, PSMD1 and PSMD6. Part of transient complex containing PSMD5, PSMC2, PSMC1 and PSMD2 formed during the assembly of the 26S proteasome.

In terms of biological role, acts as a chaperone during the assembly of the 26S proteasome, specifically of the base subcomplex of the PA700/19S regulatory complex (RC). In the initial step of the base subcomplex assembly is part of an intermediate PSMD5:PSMC2:PSMC1:PSMD2 module which probably assembles with a PSMD10:PSMC4:PSMC5:PAAF1 module followed by dissociation of PSMD5. This Bos taurus (Bovine) protein is 26S proteasome non-ATPase regulatory subunit 5 (PSMD5).